Here is a 295-residue protein sequence, read N- to C-terminus: Elongation factor Ts (295 aa).

The segment at 79–82 is involved in Mg(2+) ion dislocation from EF-Tu; the sequence is TDFV.

This sequence belongs to the EF-Ts family.

Its subcellular location is the cytoplasm. Its function is as follows. Associates with the EF-Tu.GDP complex and induces the exchange of GDP to GTP. It remains bound to the aminoacyl-tRNA.EF-Tu.GTP complex up to the GTP hydrolysis stage on the ribosome. The protein is Elongation factor Ts of Bacillus anthracis (strain A0248).